A 315-amino-acid chain; its full sequence is MRHLLSTKTLAREDAIRLLDVAEDMADVQGREVKKLPALRGKTVVNLFFEDSTRTRISFEAAAKRLSADVITFSAKGSSVSKGESLKDTAQTLAAMGADAVVVRHHSSGAPQTLAASGWIDARIVNAGDGTHEHPTQALLDAFTMRRRLHGRGSRGRDLDGVAVTIVGDILHSRVARSNVWLLRTLGAAVTLVAPPTLLPVEVSGWPAAIGYDLDAALAADPDVVMMLRIQGERMNAAFFPTTREYSRRWGLDDERLARLRADSIVMHPGPMNRGLEISAAAADSPRSTVREQVASGVSVRMAALYLLLSGDREA.

Residues Arg-54 and Thr-55 each contribute to the carbamoyl phosphate site. L-aspartate is bound at residue Lys-82. The carbamoyl phosphate site is built by Arg-104, His-134, and Gln-137. The L-aspartate site is built by Arg-174 and Arg-229. Carbamoyl phosphate-binding residues include Gly-270 and Pro-271.

Belongs to the aspartate/ornithine carbamoyltransferase superfamily. ATCase family. As to quaternary structure, heterododecamer (2C3:3R2) of six catalytic PyrB chains organized as two trimers (C3), and six regulatory PyrI chains organized as three dimers (R2).

The enzyme catalyses carbamoyl phosphate + L-aspartate = N-carbamoyl-L-aspartate + phosphate + H(+). The protein operates within pyrimidine metabolism; UMP biosynthesis via de novo pathway; (S)-dihydroorotate from bicarbonate: step 2/3. Functionally, catalyzes the condensation of carbamoyl phosphate and aspartate to form carbamoyl aspartate and inorganic phosphate, the committed step in the de novo pyrimidine nucleotide biosynthesis pathway. This Leifsonia xyli subsp. xyli (strain CTCB07) protein is Aspartate carbamoyltransferase catalytic subunit.